Reading from the N-terminus, the 240-residue chain is PF03932 family protein CutC (240 aa).

This sequence belongs to the CutC family.

The protein localises to the cytoplasm. This Xanthomonas campestris pv. campestris (strain B100) protein is PF03932 family protein CutC.